The sequence spans 240 residues: MQVDKTSFTPLYKQLFFIICQQIQNGSLPLGSQLPTQKEIARSYNVSLIVVKQAWSELINAGIISSQRGSGSVVCSVPEGVSYGHTFRGITRDLQDASVAIENRILEIAPRRARDAQADGLSLPAQHHYLYISRIRCLNNRPFNHEKIYLDLSFFPGLELTPQALEHTSLYSLLNVTSDSAIEKVEAILPSADLCEKLQIAANKPLLSVARQTFQAGKDSPFEYCRYYVLSEYFGEIHYH.

One can recognise an HTH gntR-type domain in the interval 9-77; that stretch reads TPLYKQLFFI…RGSGSVVCSV (69 aa). A DNA-binding region (H-T-H motif) is located at residues 37 to 56; the sequence is QKEIARSYNVSLIVVKQAWS.

Functionally, represses the expression of the STM4065-STM4067 operon. In Salmonella typhimurium (strain LT2 / SGSC1412 / ATCC 700720), this protein is HTH-type transcriptional repressor STM4068.